Reading from the N-terminus, the 492-residue chain is Catalase isozyme 3 (492 aa).

Active-site residues include H65 and N138. Residue Y348 coordinates heme.

This sequence belongs to the catalase family. As to quaternary structure, homotetramer. Heme serves as cofactor.

Its subcellular location is the peroxisome. The catalysed reaction is 2 H2O2 = O2 + 2 H2O. Occurs in almost all aerobically respiring organisms and serves to protect cells from the toxic effects of hydrogen peroxide. The protein is Catalase isozyme 3 (CAT3) of Nicotiana plumbaginifolia (Leadwort-leaved tobacco).